Here is a 377-residue protein sequence, read N- to C-terminus: tRNA pseudouridine synthase B (377 aa).

The active-site Nucleophile is the Asp53.

Belongs to the pseudouridine synthase TruB family. Type 1 subfamily.

The enzyme catalyses uridine(55) in tRNA = pseudouridine(55) in tRNA. Functionally, responsible for synthesis of pseudouridine from uracil-55 in the psi GC loop of transfer RNAs. The sequence is that of tRNA pseudouridine synthase B from Tropheryma whipplei (strain Twist) (Whipple's bacillus).